The primary structure comprises 1138 residues: Condensin-2 complex subunit G2 (1138 aa).

Ser30 carries the phosphoserine modification. The HEAT repeat unit spans residues 459–497 (LLPTLRYSLHDNSEKVRVAFVDLLLKIKAVRAAKFWKIC). A Phosphothreonine modification is found at Thr1114.

Component of the condensin-2 complex, which contains the SMC2 and SMC4 heterodimer, and 3 non SMC subunits that probably regulate the complex: NCAPH2, NCAPD3 and NCAPG2. As to expression, expressed in spleen, lung and testis as well as in hematopoietic cell lines.

The protein resides in the nucleus. In terms of biological role, regulatory subunit of the condensin-2 complex, a complex which establishes mitotic chromosome architecture and is involved in physical rigidity of the chromatid axis. Is required for early embryonic development and is essential for viability and expansion of the inner cell mass (ICM) of the implanting blastocyst. The protein is Condensin-2 complex subunit G2 (Ncapg2) of Mus musculus (Mouse).